Here is a 282-residue protein sequence, read N- to C-terminus: MTPLIAVLFAILQGATELFPVSSLGHVVIVPALLHWPIDQASPSFLPFVVMLHVGTATALLLYFWREWWAMLAGLLGRGEPGEVDAQRGLLLRLVVATLPAVLIGFALKKPIQHLFASPEIAAAFLIANGAVLIIGERLRRRRAGNGFGIGQLTLRDSLVIGLFQCLAFLPGLSRSGSAIVGGLTRGLDHEAAARFAFLMATPVIAGAAVIEVPHLLHHAAAARGMFGTALLAAVVAGVVAYLSTAFLMRYFRNHDRWALGPFAAYCALFGALSLILIPFGA.

8 helical membrane passes run 7-29 (VLFAILQGATELFPVSSLGHVVI), 45-65 (FLPFVVMLHVGTATALLLYFW), 89-109 (GLLLRLVVATLPAVLIGFALK), 115-135 (LFASPEIAAAFLIANGAVLII), 153-173 (LTLRDSLVIGLFQCLAFLPGL), 196-216 (FAFLMATPVIAGAAVIEVPHL), 229-249 (TALLAAVVAGVVAYLSTAFLM), and 258-278 (WALGPFAAYCALFGALSLILI).

Belongs to the UppP family.

Its subcellular location is the cell inner membrane. The catalysed reaction is di-trans,octa-cis-undecaprenyl diphosphate + H2O = di-trans,octa-cis-undecaprenyl phosphate + phosphate + H(+). In terms of biological role, catalyzes the dephosphorylation of undecaprenyl diphosphate (UPP). Confers resistance to bacitracin. In Acidiphilium cryptum (strain JF-5), this protein is Undecaprenyl-diphosphatase.